Consider the following 1127-residue polypeptide: uncharacterized protein (1127 aa).

The signal sequence occupies residues 1-26; sequence MRIHQRSAPCVPVLLFLFLPSAPLCA. Positions 533–600 are disordered; it reads ETESLSPPAD…ASSSPSEMAV (68 aa). Composition is skewed to low complexity over residues 536–549 and 583–599; these read SLSP…TPSP and AGAS…SEMA. A coiled-coil region spans residues 1076 to 1126; it reads SEDEKEYQRALQELQKGNKLVASAVVEQLLQKDRNKKSAKIQQLKKRIDAQ.

This is an uncharacterized protein from Treponema pallidum (strain Nichols).